The sequence spans 378 residues: UPF0754 membrane protein BCE33L0760 (378 aa).

Helical transmembrane passes span 1 to 21 and 357 to 377; these read MNIW…GGFT and YLGA…LLFL.

The protein belongs to the UPF0754 family.

The protein localises to the cell membrane. This is UPF0754 membrane protein BCE33L0760 from Bacillus cereus (strain ZK / E33L).